The chain runs to 256 residues: Trans-aconitate 2-methyltransferase (256 aa).

The protein belongs to the methyltransferase superfamily. Tam family.

The protein localises to the cytoplasm. It catalyses the reaction trans-aconitate + S-adenosyl-L-methionine = (E)-3-(methoxycarbonyl)pent-2-enedioate + S-adenosyl-L-homocysteine. Functionally, catalyzes the S-adenosylmethionine monomethyl esterification of trans-aconitate. This Rhizobium leguminosarum bv. trifolii (strain WSM2304) protein is Trans-aconitate 2-methyltransferase.